A 128-amino-acid chain; its full sequence is Large ribosomal subunit protein bL12 (128 aa).

The protein belongs to the bacterial ribosomal protein bL12 family. As to quaternary structure, homodimer. Part of the ribosomal stalk of the 50S ribosomal subunit. Forms a multimeric L10(L12)X complex, where L10 forms an elongated spine to which 2 to 4 L12 dimers bind in a sequential fashion. Binds GTP-bound translation factors.

Its function is as follows. Forms part of the ribosomal stalk which helps the ribosome interact with GTP-bound translation factors. Is thus essential for accurate translation. The sequence is that of Large ribosomal subunit protein bL12 from Phenylobacterium zucineum (strain HLK1).